We begin with the raw amino-acid sequence, 510 residues long: 2,3-bisphosphoglycerate-independent phosphoglycerate mutase (510 aa).

Mn(2+) contacts are provided by aspartate 13 and serine 63. The active-site Phosphoserine intermediate is serine 63. Residues histidine 124, 154 to 155 (RD), arginine 186, arginine 192, 262 to 265 (RADR), and lysine 334 contribute to the substrate site. Residues aspartate 401, histidine 405, aspartate 442, histidine 443, and histidine 461 each contribute to the Mn(2+) site.

It belongs to the BPG-independent phosphoglycerate mutase family. As to quaternary structure, monomer. Requires Mn(2+) as cofactor.

The catalysed reaction is (2R)-2-phosphoglycerate = (2R)-3-phosphoglycerate. It participates in carbohydrate degradation; glycolysis; pyruvate from D-glyceraldehyde 3-phosphate: step 3/5. In terms of biological role, catalyzes the interconversion of 2-phosphoglycerate and 3-phosphoglycerate. The protein is 2,3-bisphosphoglycerate-independent phosphoglycerate mutase of Vibrio campbellii (strain ATCC BAA-1116).